Reading from the N-terminus, the 1562-residue chain is Cell wall protein RBR3 (1562 aa).

The signal sequence occupies residues 1 to 20 (MIIFRKSFFTFWLLLNSVLA). N-linked (GlcNAc...) asparagine glycosylation occurs at asparagine 190. Over residues 338–353 (APGTNPTEYTTTITTT) the composition is skewed to low complexity. Residues 338-366 (APGTNPTEYTTTITTTNSAGKPLTETGVV) are disordered. Asparagine 373 carries N-linked (GlcNAc...) asparagine glycosylation. 2 stretches are compositionally biased toward low complexity: residues 383 to 415 (FPTS…SQPS) and 422 to 729 (SSSK…ISAT). Disordered stretches follow at residues 383-729 (FPTS…ISAT), 1404-1424 (GSGS…SSSN), and 1455-1486 (YSSG…GNSN). Residues asparagine 602, asparagine 679, and asparagine 705 are each glycosylated (N-linked (GlcNAc...) asparagine). Positions 1407 to 1419 (SDSGSGSGSGSGS) are enriched in gly residues. The segment covering 1468–1486 (GANNVGSNQTPTVSGGNSN) has biased composition (polar residues). Residue asparagine 1538 is the site of GPI-anchor amidated asparagine attachment. The propeptide at 1539-1562 (SGSKFSVGKSAFIAIILTTFIGFI) is removed in mature form.

It belongs to the HYR1/IFF family. Post-translationally, the GPI-anchor is attached to the protein in the endoplasmic reticulum and serves to target the protein to the cell surface. There, the glucosamine-inositol phospholipid moiety is cleaved off and the GPI-modified mannoprotein is covalently attached via its lipidless GPI glycan remnant to the 1,6-beta-glucan of the outer cell wall layer.

It is found in the secreted. The protein localises to the cell wall. The protein resides in the membrane. Its function is as follows. GPI-anchored cell wall protein involved in cell wall organization, hyphal growth, as well as in host-fungal interaction and virulence. The polypeptide is Cell wall protein RBR3 (RBR3) (Candida albicans (strain SC5314 / ATCC MYA-2876) (Yeast)).